The sequence spans 744 residues: Cytosolic neutral trehalase (744 aa).

Residues aspartate 99, aspartate 101, asparagine 103, glutamine 105, and aspartate 110 each coordinate Ca(2+). Substrate-binding positions include arginine 286, 293–294, asparagine 330, 339–341, glutamate 406, arginine 455, and glycine 458; these read WD and RSQ. Catalysis depends on proton donor/acceptor residues aspartate 460 and glutamate 665.

Belongs to the glycosyl hydrolase 37 family. It depends on Ca(2+) as a cofactor.

It is found in the cytoplasm. The catalysed reaction is alpha,alpha-trehalose + H2O = alpha-D-glucose + beta-D-glucose. It participates in carbohydrate degradation. Functionally, hydrolyzes intracellular trehalose to glucose. This Neurospora crassa (strain ATCC 24698 / 74-OR23-1A / CBS 708.71 / DSM 1257 / FGSC 987) protein is Cytosolic neutral trehalase.